The chain runs to 365 residues: Protein RecA (365 aa).

73–80 (GPESSGKT) lines the ATP pocket.

The protein belongs to the RecA family.

It is found in the cytoplasm. Can catalyze the hydrolysis of ATP in the presence of single-stranded DNA, the ATP-dependent uptake of single-stranded DNA by duplex DNA, and the ATP-dependent hybridization of homologous single-stranded DNAs. It interacts with LexA causing its activation and leading to its autocatalytic cleavage. This Prochlorococcus marinus (strain MIT 9301) protein is Protein RecA.